Reading from the N-terminus, the 211-residue chain is Probable nicotinate-nucleotide adenylyltransferase (211 aa).

It belongs to the NadD family.

The enzyme catalyses nicotinate beta-D-ribonucleotide + ATP + H(+) = deamido-NAD(+) + diphosphate. It participates in cofactor biosynthesis; NAD(+) biosynthesis; deamido-NAD(+) from nicotinate D-ribonucleotide: step 1/1. Its function is as follows. Catalyzes the reversible adenylation of nicotinate mononucleotide (NaMN) to nicotinic acid adenine dinucleotide (NaAD). This is Probable nicotinate-nucleotide adenylyltransferase from Thermoanaerobacter sp. (strain X514).